A 136-amino-acid chain; its full sequence is UPF0213 protein AHA_3736 (136 aa).

The region spanning 17–92 (SHWFIYMVRT…KQQSKAFKEQ (76 aa)) is the GIY-YIG domain. The interval 114–136 (QKRPRYAAAKEGSDNRECQRQVD) is disordered. The segment covering 124 to 136 (EGSDNRECQRQVD) has biased composition (basic and acidic residues).

The protein belongs to the UPF0213 family.

This chain is UPF0213 protein AHA_3736, found in Aeromonas hydrophila subsp. hydrophila (strain ATCC 7966 / DSM 30187 / BCRC 13018 / CCUG 14551 / JCM 1027 / KCTC 2358 / NCIMB 9240 / NCTC 8049).